Reading from the N-terminus, the 3084-residue chain is Highly reducing polyketide synthase sdnO (3084 aa).

Residues 4-430 (PIPLAVVGIA…GTNAHAVLEK (427 aa)) form the Ketosynthase family 3 (KS3) domain. Catalysis depends on for beta-ketoacyl synthase activity residues C178, H313, and H353. The interval 541 to 841 (FIFTGQGAQW…LAGPLRQSVA (301 aa)) is malonyl-CoA:ACP transacylase (MAT) domain. The For malonyltransferase activity role is filled by S632. An N-terminal hotdog fold region spans residues 931-1071 (HDLLGLRMTD…GSVLIDLVSS (141 aa)). Residues 931 to 1243 (HDLLGLRMTD…RSAEADMLVF (313 aa)) are dehydratase (DH) domain. The PKS/mFAS DH domain maps to 931-1275 (HDLLGLRMTD…LRSLAALDGA (345 aa)). The active-site Proton acceptor; for dehydratase activity is H963. The C-terminal hotdog fold stretch occupies residues 1099 to 1275 (LQPGEDIPPS…LRSLAALDGA (177 aa)). Residue D1177 is the Proton donor; for dehydratase activity of the active site. The tract at residues 1733-2045 (GTAHAATFVE…RHENMTKYVV (313 aa)) is enoylreductase (ER) domain. The segment at 2069 to 2252 (ATYVVAGGLG…YMALNIGLIE (184 aa)) is catalytic ketoreductase (KRc) domain. A Carrier domain is found at 2363 to 2440 (DIEAFAARAI…ALARKVTLRS (78 aa)). The residue at position 2400 (S2400) is an O-(pantetheine 4'-phosphoryl)serine. Positions 2445-2501 (GGAGGDASSTGNSESMARTPSDSSTVPTSIPATPSRSPSREPPAKETLTKSQQHLPI) are disordered. The span at 2456 to 2481 (NSESMARTPSDSSTVPTSIPATPSRS) shows a compositional bias: polar residues. The span at 2482–2492 (PSREPPAKETL) shows a compositional bias: basic and acidic residues. Positions 2864 to 3084 (HFYSQLNRAF…LGVVRRVVEG (221 aa)) are choline/carnitine acyltransferase domain.

It participates in antibiotic biosynthesis. Its function is as follows. Highly reducing polyketide synthase; part of the gene cluster that mediates the biosynthesis of sordarin and hypoxysordarin, glycoside antibiotics with a unique tetracyclic diterpene aglycone structure. First, the geranylgeranyl diphosphate synthase sdnC constructs GGDP from farnesyl diphosphate and isopentenyl diphosphate. The diterpene cyclase sdnA then catalyzes the cyclization of GGDP to afford cycloaraneosene. Cycloaraneosene is then hydroxylated four times by the putative cytochrome P450 monooxygenases sdnB, sdnE, sdnF and sdnH to give a hydroxylated cycloaraneosene derivative such as cycloaraneosene-8,9,13,19-tetraol. Although the order of the hydroxylations is unclear, at least C8, C9 and C13 of the cycloaraneosene skeleton are hydroxylated before the sordaricin formation. Dehydration of the 13-hydroxy group of the hydroxylated cycloaraneosene derivative might be catalyzed by an unassigned hypothetical protein such as sdnG and sdnP to construct the cyclopentadiene moiety. The FAD-dependent oxidoreductase sdnN is proposed to catalyze the oxidation at C9 of the hydroxylated cycloaraneosene derivative and also catalyze the Baeyer-Villiger oxidation to give the lactone intermediate. The presumed lactone intermediate would be hydrolyzed to give an acrolein moiety and a carboxylate moiety. Then, [4+2]cycloaddition would occur between the acrolein moiety and the cyclopentadiene moiety to give sordaricin. SdnN might also be involved in the [4+2]cycloaddition after the hypothesized oxidation to accommodate the oxidized product and prompt the [4+2]cycloaddition. GDP-6-deoxy-D-altrose may be biosynthesized from GDP-D-mannose by the putative GDP-mannose-4,6-dehydratase sdnI and the short-chain dehydrogenase sdnK. The glycosyltransferase sdnJ catalyzes the attachment of 6-deoxy-D-altrose onto the 19-hydroxy group of sordaricin to give 4'-O-demethylsordarin. The methyltransferase sdnD would complete the biosynthesis of sordarin. Sordarin can be further modified into hypoxysordarin. The unique acyl chain at the 3'-hydroxy group of hypoxysordarin would be constructed by an iterative type I PKS sdnO and the trans-acting polyketide methyltransferase sdnL. SdnL would be responsible for the introduction of an alpha-methyl group of the polyketide chain. Alternatively, the putative beta-lactamase-like sdnR might be responsible for the cleavage and transfer of the polyketide chain from the PKS sdnO to sordarin. Two putative cytochrome P450 monooxygenases, sdnQ and sdnT, might catalyze the epoxidations of the polyketide chain to complete the biosynthesis of hypoxysordarin. Transcriptional regulators sdnM and sdnS are presumably encoded for the transcriptional regulation of the expression of the sdn gene cluster. This chain is Highly reducing polyketide synthase sdnO, found in Sordaria araneosa (Pleurage araneosa).